The chain runs to 89 residues: NADH-ubiquinone oxidoreductase chain 4L (89 aa).

Transmembrane regions (helical) follow at residues 1-21 (MNLS…NRKN), 22-42 (IILM…LILI), and 55-75 (FAIY…GILV).

Belongs to the complex I subunit 4L family.

Its subcellular location is the mitochondrion membrane. The enzyme catalyses a ubiquinone + NADH + 5 H(+)(in) = a ubiquinol + NAD(+) + 4 H(+)(out). In terms of biological role, core subunit of the mitochondrial membrane respiratory chain NADH dehydrogenase (Complex I) that is believed to belong to the minimal assembly required for catalysis. Complex I functions in the transfer of electrons from NADH to the respiratory chain. The immediate electron acceptor for the enzyme is believed to be ubiquinone. This Trichophyton rubrum (Athlete's foot fungus) protein is NADH-ubiquinone oxidoreductase chain 4L (ND4L).